The sequence spans 170 residues: Ribosome maturation factor RimM (170 aa).

The 73-residue stretch at 98-170 (PDEYYWVDLE…LIVVDWDPDF (73 aa)) folds into the PRC barrel domain.

The protein belongs to the RimM family. In terms of assembly, binds ribosomal protein uS19.

The protein localises to the cytoplasm. Functionally, an accessory protein needed during the final step in the assembly of 30S ribosomal subunit, possibly for assembly of the head region. Essential for efficient processing of 16S rRNA. May be needed both before and after RbfA during the maturation of 16S rRNA. It has affinity for free ribosomal 30S subunits but not for 70S ribosomes. In Xanthomonas oryzae pv. oryzae (strain MAFF 311018), this protein is Ribosome maturation factor RimM.